Consider the following 818-residue polypeptide: FAD-dependent monooxygenase anuJ (818 aa).

Glu46, Ala60, Arg122, Asp329, and Gly342 together coordinate FAD. The next 3 helical transmembrane spans lie at 471-491 (VLWA…MFSV), 539-559 (FFYQ…IMLV), and 571-591 (LSFA…FVPI). Residue Asn614 is glycosylated (N-linked (GlcNAc...) asparagine). The next 2 membrane-spanning stretches (helical) occupy residues 621-641 (ILPV…LSPV) and 647-667 (AAGF…AGLA). Asn683 carries N-linked (GlcNAc...) asparagine glycosylation. A run of 2 helical transmembrane segments spans residues 743–763 (WDQV…FADL) and 778–798 (FSAL…LMWL).

Belongs to the paxM FAD-dependent monooxygenase family.

The protein resides in the membrane. Its function is as follows. Highly reducing polyketide synthase; part of the gene cluster that mediates the biosynthesis of annullatin D, an alkylated aromatic polyketide with a fused dihydrobenzofuran lactone ring system that exhibits potent agonistic activities toward the cannabinoid receptors. AnuJ does not seem to play a role within the pathway. The annullatin backbone 2-hydroxymethyl-3-pentylphenol is assembled from one acetyl-CoA starter unit and 5 malonyl-CoA elongation units by cooperation of the highly reducing polyketide synthase anuA, the short-chain dehydrogenase anuB and the oxidoreductase anuC, before being hydroxylated at the C-5 alkyl chain by the cytochrome P450 monooxygenase anuE to form (8S)-annullatin E. The prenyltransferase anuH subsequently installs one isoprenyl group at the benzene ring to form (8S)-annullatin J. Enzymatic or nonenzymatic dihydro-benzofuran ring formation between the prenyl and the phenolic hydroxyl groups in (8S)-annullatin J results in two diastereomers (2S,9S)-annullatin H and compound 12. The intermediate (2S,9S)-annullatin H is then converted to (2S,9S)-annullatin D by the FAD-linked oxidoreductase anuG-catalyzed five-member lactone ring formation. The isomer 12 acts as a substrate for the short-chain dehydrogenase anuF and is oxidized to (2R)-annullatin F, which is subsequently acetylated by an acetyltransferase leading to (2R)-annullatin G formation. The remaining enzymes identified within the cluster, anuD, anuI and anuJ, seem not to be involved in annullatin biosynthesis. The chain is FAD-dependent monooxygenase anuJ from Penicillium roqueforti (strain FM164).